Reading from the N-terminus, the 187-residue chain is Elongation factor P (187 aa).

It belongs to the elongation factor P family.

It is found in the cytoplasm. Its pathway is protein biosynthesis; polypeptide chain elongation. Functionally, involved in peptide bond synthesis. Stimulates efficient translation and peptide-bond synthesis on native or reconstituted 70S ribosomes in vitro. Probably functions indirectly by altering the affinity of the ribosome for aminoacyl-tRNA, thus increasing their reactivity as acceptors for peptidyl transferase. This chain is Elongation factor P, found in Roseobacter denitrificans (strain ATCC 33942 / OCh 114) (Erythrobacter sp. (strain OCh 114)).